The following is a 323-amino-acid chain: Transaldolase (323 aa).

The active-site Schiff-base intermediate with substrate is the Lys133.

This sequence belongs to the transaldolase family. Type 1 subfamily. As to quaternary structure, monomer.

It catalyses the reaction D-sedoheptulose 7-phosphate + D-glyceraldehyde 3-phosphate = D-erythrose 4-phosphate + beta-D-fructose 6-phosphate. It functions in the pathway carbohydrate degradation; pentose phosphate pathway; D-glyceraldehyde 3-phosphate and beta-D-fructose 6-phosphate from D-ribose 5-phosphate and D-xylulose 5-phosphate (non-oxidative stage): step 2/3. Transaldolase important for the balance of metabolites in the pentose-phosphate pathway. Involved in xylose fermentation to ethanol. In Fusarium oxysporum f. sp. lycopersici (strain 4287 / CBS 123668 / FGSC 9935 / NRRL 34936) (Fusarium vascular wilt of tomato), this protein is Transaldolase.